Here is a 210-residue protein sequence, read N- to C-terminus: Orotate phosphoribosyltransferase (210 aa).

Position 26 (Lys-26) interacts with 5-phospho-alpha-D-ribose 1-diphosphate. 34-35 lines the orotate pocket; sequence FF. 5-phospho-alpha-D-ribose 1-diphosphate contacts are provided by residues 72–73, Arg-98, Lys-99, Lys-102, His-104, and 123–131; these read YK and DDVITAGTA. The orotate site is built by Thr-127 and Arg-155.

The protein belongs to the purine/pyrimidine phosphoribosyltransferase family. PyrE subfamily. Homodimer. It depends on Mg(2+) as a cofactor.

The enzyme catalyses orotidine 5'-phosphate + diphosphate = orotate + 5-phospho-alpha-D-ribose 1-diphosphate. It functions in the pathway pyrimidine metabolism; UMP biosynthesis via de novo pathway; UMP from orotate: step 1/2. In terms of biological role, catalyzes the transfer of a ribosyl phosphate group from 5-phosphoribose 1-diphosphate to orotate, leading to the formation of orotidine monophosphate (OMP). This is Orotate phosphoribosyltransferase from Legionella pneumophila (strain Paris).